A 90-amino-acid chain; its full sequence is Sec-independent protein translocase protein TatA (90 aa).

Residues 2 to 22 (GVGGISIWQLLIVLVIILLLF) traverse the membrane as a helical segment. Composition is skewed to basic and acidic residues over residues 45–68 (LRDE…HKAE) and 76–90 (ADAD…DEHK). The tract at residues 45 to 90 (LRDEERRDAEEAATIEHKQAHKAENPSQRQQADADFKIKSGNDEHK) is disordered.

This sequence belongs to the TatA/E family. In terms of assembly, the Tat system comprises two distinct complexes: a TatABC complex, containing multiple copies of TatA, TatB and TatC subunits, and a separate TatA complex, containing only TatA subunits. Substrates initially bind to the TatABC complex, which probably triggers association of the separate TatA complex to form the active translocon.

Its subcellular location is the cell inner membrane. Functionally, part of the twin-arginine translocation (Tat) system that transports large folded proteins containing a characteristic twin-arginine motif in their signal peptide across membranes. TatA could form the protein-conducting channel of the Tat system. The protein is Sec-independent protein translocase protein TatA of Nitrosococcus oceani (strain ATCC 19707 / BCRC 17464 / JCM 30415 / NCIMB 11848 / C-107).